A 7260-amino-acid chain; its full sequence is Nonribosomal peptide synthetase ecdA (7260 aa).

A Carrier 1 domain is found at 4 to 80 (TNEMERKRVF…ELFETIQYLQ (77 aa)). Ser-41 is modified (O-(pantetheine 4'-phosphoryl)serine). Residues 134–549 (EDVYPSTPLQ…SINEILTLPA (416 aa)) are condensation 1. Positions 575–965 (QDQVRSQPAA…DGSLLYVGRC (391 aa)) are adenylation 1. Residues 1090–1166 (APSTAIEHKL…DLARELEGRN (77 aa)) enclose the Carrier 2 domain. Ser-1127 carries the post-translational modification O-(pantetheine 4'-phosphoryl)serine. The condensation 2 stretch occupies residues 1208 to 1628 (EDIIPCTAMQ…LGDLSLLSAD (421 aa)). The interval 1653–2054 (EEQITARPDS…GRRDTQIKIR (402 aa)) is adenylation 2. Residues 2188-2264 (TPSTPTESQL…DLANLLSSRF (77 aa)) form the Carrier 3 domain. Ser-2225 is modified (O-(pantetheine 4'-phosphoryl)serine). The tract at residues 2314–2719 (QDVYPCTPLQ…THVVQQLCDP (406 aa)) is condensation 3. Residues 2763–3156 (KQALAQPNAP…GRRDTQVKIR (394 aa)) form an adenylation 3 region. The Carrier 4 domain occupies 3287-3365 (QPATEMEKML…ELAQVLEERV (79 aa)). Position 3324 is an O-(pantetheine 4'-phosphoryl)serine (Ser-3324). The condensation 4 stretch occupies residues 3417 to 3831 (VQDVYPCTPL…LLSPNDQQQI (415 aa)). The interval 3851–4248 (EEQAMAHPTK…SFVYVARRNT (398 aa)) is adenylation 4. One can recognise a Carrier 5 domain in the interval 4394-4471 (APATAMERTL…DLANLLADGA (78 aa)). Ser-4431 bears the O-(pantetheine 4'-phosphoryl)serine mark. A condensation 5 region spans residues 4510-4910 (EDIYPATPLQ…HFVHVAEQLF (401 aa)). Residues 4955-5357 (ERAALQPNAP…GRRDLQVKIR (403 aa)) form an adenylation 5 region. The Carrier 6 domain maps to 5496-5573 (APRTVMEQQV…DLALVLSERG (78 aa)). Ser-5533 carries the O-(pantetheine 4'-phosphoryl)serine modification. Residues 5622–6043 (EDVYPCTPLQ…AVSEKDERQI (422 aa)) are condensation 6. The adenylation 6 stretch occupies residues 6063–6460 (QEQVARTPGE…GRHDSQVKIR (398 aa)). Residues 6592–6668 (APSTAMERQL…EVAQVVEDRV (77 aa)) form the Carrier 7 domain. Ser-6629 is subject to O-(pantetheine 4'-phosphoryl)serine. The segment at 6718–7133 (LPTTDFQALT…ILDSPGLLVS (416 aa)) is condensation 7. Positions 7241–7260 (CEEAEKSASVTSSERRLATI) are disordered.

Belongs to the NRP synthetase family.

It functions in the pathway antifungal biosynthesis. In terms of biological role, nonribosomal peptide synthetase; part of the gene cluster that mediates the biosynthesis of echinocandin B, a fungal lipidated cyclic hexapeptide that acts as an antifungal agent. Linoleoyl-AMP, produced by the fatty-acyl-AMP ligase ecdI, is transferred to the initiation carrier domain (T0) of ecdA. The linoleoyl-S-phosphopantetheinyl-T0 is sequentially extended with L-ornithine, L-threonine, L-proline, L-homotyrosine, L-threonine, and 4R-methyl-L-proline to form the linear hexapeptide. Thereafter, the terminal condensation (C7) performs macrocyclization of the NRPS product and the cyclic scaffold is released from ecdA. All six of the amino acid residues are hydroxylated, including 4R,5R-dihydroxy-L-ornithine, 4R-hydroxyl-L-proline, 3S,4S-dihydroxy-L-homotyrosine, and 3S-hydroxyl-4S-methyl-L-prolin. In the pathway, all the hydroxylation reactions are proposed to occur following completion of the cyclic peptide, so the unhydroxylated precursor produced by ecdA will undergo six rounds of hydroxylation. Five hydroxylase genes (ecdG, ecdH, ecdK, htyE and htyF) are embedded within the echinocandin B (ecd) and L-homotyrosine (hty) clusters. In Aspergillus rugulosus (Emericella rugulosa), this protein is Nonribosomal peptide synthetase ecdA.